Consider the following 436-residue polypeptide: Trigger factor (436 aa).

The region spanning 163 to 248 is the PPIase FKBP-type domain; it reads GDRVTVDFEG…VKKIEAANLP (86 aa).

The protein belongs to the FKBP-type PPIase family. Tig subfamily.

The protein localises to the cytoplasm. The enzyme catalyses [protein]-peptidylproline (omega=180) = [protein]-peptidylproline (omega=0). In terms of biological role, involved in protein export. Acts as a chaperone by maintaining the newly synthesized protein in an open conformation. Functions as a peptidyl-prolyl cis-trans isomerase. This chain is Trigger factor, found in Delftia acidovorans (strain DSM 14801 / SPH-1).